The primary structure comprises 600 residues: tRNA(Ile)-lysidine synthase, chloroplastic (600 aa).

Residue 35-40 (SGGQDS) coordinates ATP.

Belongs to the tRNA(Ile)-lysidine synthase family.

It localises to the plastid. Its subcellular location is the chloroplast. The catalysed reaction is cytidine(34) in tRNA(Ile2) + L-lysine + ATP = lysidine(34) in tRNA(Ile2) + AMP + diphosphate + H(+). In terms of biological role, ligates lysine onto the cytidine present at position 34 of the AUA codon-specific tRNA(Ile) that contains the anticodon CAU, in an ATP-dependent manner. Cytidine is converted to lysidine, thus changing the amino acid specificity of the tRNA from methionine to isoleucine. In Tupiella akineta (Green alga), this protein is tRNA(Ile)-lysidine synthase, chloroplastic.